The sequence spans 373 residues: Phospho-N-acetylmuramoyl-pentapeptide-transferase (373 aa).

10 consecutive transmembrane segments (helical) span residues 34 to 54 (GALFTSALIVFLFGPRIISSL), 78 to 98 (TPTMGGLMILAGIVVSSLLWA), 100 to 120 (LANVYVVATLLVTLGFGAIGF), 141 to 161 (LGLEFIIAAIAVYFMMNTALS), 181 to 201 (FMLNLGMFFVLFGAFVIVSAG), 212 to 232 (GLAIVPVMIAAASFGVIAYLA), 252 to 272 (LAVVLGAVIGAGLGFLWFNAP), 275 to 295 (AIFMGDTGSLALGGLIGTVAV), 301 to 321 (IVMAIIGGLFVLEALSVIIQV), and 350 to 370 (QVVVRFWIVAVILAMIGLSTL).

Belongs to the glycosyltransferase 4 family. MraY subfamily. It depends on Mg(2+) as a cofactor.

It localises to the cell inner membrane. It carries out the reaction UDP-N-acetyl-alpha-D-muramoyl-L-alanyl-gamma-D-glutamyl-meso-2,6-diaminopimeloyl-D-alanyl-D-alanine + di-trans,octa-cis-undecaprenyl phosphate = di-trans,octa-cis-undecaprenyl diphospho-N-acetyl-alpha-D-muramoyl-L-alanyl-D-glutamyl-meso-2,6-diaminopimeloyl-D-alanyl-D-alanine + UMP. It functions in the pathway cell wall biogenesis; peptidoglycan biosynthesis. Functionally, catalyzes the initial step of the lipid cycle reactions in the biosynthesis of the cell wall peptidoglycan: transfers peptidoglycan precursor phospho-MurNAc-pentapeptide from UDP-MurNAc-pentapeptide onto the lipid carrier undecaprenyl phosphate, yielding undecaprenyl-pyrophosphoryl-MurNAc-pentapeptide, known as lipid I. The protein is Phospho-N-acetylmuramoyl-pentapeptide-transferase of Rhizobium rhizogenes (strain K84 / ATCC BAA-868) (Agrobacterium radiobacter).